The following is a 184-amino-acid chain: ATP synthase subunit b (184 aa).

The chain crosses the membrane as a helical span at residues 4–24; it reads LSVLFALVASPALAASGPFFS.

The protein belongs to the ATPase B chain family. In terms of assembly, F-type ATPases have 2 components, F(1) - the catalytic core - and F(0) - the membrane proton channel. F(1) has five subunits: alpha(3), beta(3), gamma(1), delta(1), epsilon(1). F(0) has three main subunits: a(1), b(2) and c(10-14). The alpha and beta chains form an alternating ring which encloses part of the gamma chain. F(1) is attached to F(0) by a central stalk formed by the gamma and epsilon chains, while a peripheral stalk is formed by the delta and b chains.

The protein localises to the cell inner membrane. F(1)F(0) ATP synthase produces ATP from ADP in the presence of a proton or sodium gradient. F-type ATPases consist of two structural domains, F(1) containing the extramembraneous catalytic core and F(0) containing the membrane proton channel, linked together by a central stalk and a peripheral stalk. During catalysis, ATP synthesis in the catalytic domain of F(1) is coupled via a rotary mechanism of the central stalk subunits to proton translocation. In terms of biological role, component of the F(0) channel, it forms part of the peripheral stalk, linking F(1) to F(0). In Paracoccus denitrificans (strain Pd 1222), this protein is ATP synthase subunit b.